The chain runs to 239 residues: Orotidine 5'-phosphate decarboxylase (239 aa).

Residues Asp12, Lys34, 61–70 (DLKFHDIPNT), Thr125, Arg188, Gln197, Gly217, and Arg218 each bind substrate. Lys63 acts as the Proton donor in catalysis.

It belongs to the OMP decarboxylase family. Type 1 subfamily. In terms of assembly, homodimer.

It carries out the reaction orotidine 5'-phosphate + H(+) = UMP + CO2. The protein operates within pyrimidine metabolism; UMP biosynthesis via de novo pathway; UMP from orotate: step 2/2. Catalyzes the decarboxylation of orotidine 5'-monophosphate (OMP) to uridine 5'-monophosphate (UMP). In Syntrophomonas wolfei subsp. wolfei (strain DSM 2245B / Goettingen), this protein is Orotidine 5'-phosphate decarboxylase.